Here is a 366-residue protein sequence, read N- to C-terminus: Molybdenum import ATP-binding protein ModC (366 aa).

Positions 1–231 constitute an ABC transporter domain; the sequence is MSEVILQLQK…KAMRPWQSFS (231 aa). An ATP-binding site is contributed by 33-40; the sequence is GRSGAGKT. The 70-residue stretch at 292–361 folds into the Mop domain; the sequence is ASSIRNILPA…IKGVSVAQRD (70 aa).

The protein belongs to the ABC transporter superfamily. Molybdate importer (TC 3.A.1.8) family. The complex is composed of two ATP-binding proteins (ModC), two transmembrane proteins (ModB) and a solute-binding protein (ModA).

The protein resides in the cell inner membrane. It catalyses the reaction molybdate(out) + ATP + H2O = molybdate(in) + ADP + phosphate + H(+). Functionally, part of the ABC transporter complex ModABC involved in molybdenum import. Responsible for energy coupling to the transport system. This is Molybdenum import ATP-binding protein ModC from Vibrio cholerae serotype O1 (strain ATCC 39315 / El Tor Inaba N16961).